Reading from the N-terminus, the 344-residue chain is GTPase Obg (344 aa).

The 159-residue stretch at methionine 1–isoleucine 159 folds into the Obg domain. The OBG-type G domain occupies alanine 160 to aspartate 327. Residues glycine 166–serine 173, phenylalanine 191–histidine 195, aspartate 212–glycine 215, asparagine 279–aspartate 282, and serine 308–alanine 310 contribute to the GTP site. Mg(2+)-binding residues include serine 173 and threonine 193.

Belongs to the TRAFAC class OBG-HflX-like GTPase superfamily. OBG GTPase family. In terms of assembly, monomer. Requires Mg(2+) as cofactor.

The protein resides in the cytoplasm. Functionally, an essential GTPase which binds GTP, GDP and possibly (p)ppGpp with moderate affinity, with high nucleotide exchange rates and a fairly low GTP hydrolysis rate. Plays a role in control of the cell cycle, stress response, ribosome biogenesis and in those bacteria that undergo differentiation, in morphogenesis control. In Ruegeria pomeroyi (strain ATCC 700808 / DSM 15171 / DSS-3) (Silicibacter pomeroyi), this protein is GTPase Obg.